The primary structure comprises 111 residues: Large ribosomal subunit protein uL24 (111 aa).

Belongs to the universal ribosomal protein uL24 family. In terms of assembly, part of the 50S ribosomal subunit.

Its function is as follows. One of two assembly initiator proteins, it binds directly to the 5'-end of the 23S rRNA, where it nucleates assembly of the 50S subunit. Functionally, one of the proteins that surrounds the polypeptide exit tunnel on the outside of the subunit. This Heliobacterium modesticaldum (strain ATCC 51547 / Ice1) protein is Large ribosomal subunit protein uL24.